Consider the following 270-residue polypeptide: Fructose-2,6-bisphosphatase TIGAR (270 aa).

The active-site Tele-phosphohistidine intermediate is the histidine 11. At lysine 50 the chain carries N6-acetyllysine. The Proton donor/acceptor role is filled by glutamate 89.

This sequence belongs to the phosphoglycerate mutase family. Interacts with HK2; the interaction increases hexokinase HK2 activity in a hypoxia- and HIF1A-dependent manner, resulting in the regulation of mitochondrial membrane potential, thus increasing NADPH production and decreasing intracellular ROS levels.

Its subcellular location is the cytoplasm. It is found in the nucleus. The protein resides in the mitochondrion. It carries out the reaction beta-D-fructose 2,6-bisphosphate + H2O = beta-D-fructose 6-phosphate + phosphate. In terms of biological role, fructose-bisphosphatase hydrolyzing fructose-2,6-bisphosphate as well as fructose-1,6-bisphosphate. Acts as a negative regulator of glycolysis by lowering intracellular levels of fructose-2,6-bisphosphate in a p53/TP53-dependent manner, resulting in the pentose phosphate pathway (PPP) activation and NADPH production. Contributes to the generation of reduced glutathione to cause a decrease in intracellular reactive oxygen species (ROS) content, correlating with its ability to protect cells from oxidative or metabolic stress-induced cell death. Plays a role in promoting protection against cell death during hypoxia by decreasing mitochondria ROS levels in a HK2-dependent manner through a mechanism that is independent of its fructose-bisphosphatase activity. In response to cardiac damage stress, mediates p53-induced inhibition of myocyte mitophagy through ROS levels reduction and the subsequent inactivation of BNIP3. Reduced mitophagy results in an enhanced apoptotic myocyte cell death, and exacerbates cardiac damage. Plays a role in adult intestinal regeneration; contributes to the growth, proliferation and survival of intestinal crypts following tissue ablation. Plays a neuroprotective role against ischemic brain damage by enhancing PPP flux and preserving mitochondria functions. Protects glioma cells from hypoxia- and ROS-induced cell death by inhibiting glycolysis and activating mitochondrial energy metabolism and oxygen consumption in a TKTL1-dependent and p53/TP53-independent manner. Plays a role in cancer cell survival by promoting DNA repair through activating PPP flux in a CDK5-ATM-dependent signaling pathway during hypoxia and/or genome stress-induced DNA damage responses. Involved in intestinal tumor progression. This chain is Fructose-2,6-bisphosphatase TIGAR, found in Bos taurus (Bovine).